The primary structure comprises 226 residues: Ornithine decarboxylase antizyme (226 aa).

Belongs to the ODC antizyme family. Interacts with ODC and thereby sterically blocks ODC homodimerization.

Its function is as follows. Ornithine decarboxylase (ODC) antizyme protein that negatively regulates ODC activity and intracellular polyamine biosynthesis in response to increased intracellular polyamine levels. Binds to ODC monomers, inhibiting the assembly of the functional ODC homodimer, and targets the monomers for ubiquitin-independent proteolytic destruction by the 26S proteasome. This chain is Ornithine decarboxylase antizyme (spa1), found in Schizosaccharomyces pombe (strain 972 / ATCC 24843) (Fission yeast).